We begin with the raw amino-acid sequence, 121 residues long: Protein AC4 (121 aa).

Residues 11-30 form a disordered region; the sequence is RGQSSNPHTSESQERNIQTG. A compositionally biased stretch (polar residues) spans 12-30; that stretch reads GQSSNPHTSESQERNIQTG.

This sequence belongs to the geminiviridae protein AC4/C4 family.

Functionally, pathogenicity determinant. May act as a suppressor of RNA-mediated gene silencing, also known as post-transcriptional gene silencing (PTGS), a mechanism of plant viral defense that limits the accumulation of viral RNAs. This Cabbage leaf curl virus (isolate Jamaica) (CaLCuV) protein is Protein AC4.